Consider the following 115-residue polypeptide: Meromycolate extension acyl carrier protein (115 aa).

Positions 3–81 (VTQEEIIAGI…DVVTYIQKLE (79 aa)) constitute a Carrier domain. An O-(pantetheine 4'-phosphoryl)serine modification is found at serine 41.

It belongs to the acyl carrier protein (ACP) family. In terms of processing, 4'-phosphopantetheine is transferred from CoA to a specific serine of apo-AcpM.

It is found in the cytoplasm. Functionally, acyl carrier protein involved in meromycolate extension. The protein is Meromycolate extension acyl carrier protein (acpM) of Mycobacterium leprae (strain TN).